Reading from the N-terminus, the 576-residue chain is MNIQAILSEKVSQALIAAGAPADSEAHIRQSAKAQFGDYQANGVMAAAKKVGMPPRQLAEKVVNLLNLQGIASKVEIAGPGFINIFLDKAWIAANIETALKDEKLGVTPAKPQTIVVDYSAPNVAKQMHVGHLRSTIIGDAAVRTLEFLGHKVIRANHVGDWGTQFGMLIAYLEKVQNENASDMALSDLEAFYREAKKHYDEDEEFAIRARGYVVKLQGGDEYCRTMWRKLVDITMAQNQQTYDRLNVTLTKDSVMGESLYNDLLPSIVADLKQQGLAVESDGATVVYLDEYKNKEGEPMGVIIQKQDGGYLYTTTDIACAKYRYETLHADRILYYIDSRQHQHLMQAWTIVRKAGYVPESVSLEHHMFGMMLGKDSKPFKTRAGGTVRLTDLLDEAIERANTLIREKNPDMPEDELKKVVSAVGIGAVKYADLSKSRTTDYIFDWDNMLAFEGNTAPYMQYAYTRVASIFKRAEIDESSLTLPVILNEDREQTLATRLLQFEETITTVAREGTPHVMCAYLYDLAGLFSCFYEHCQILNAESEELRQSRLKLALLTAKTLKQGLNTLGIETVERM.

The 'HIGH' region signature appears at 122 to 132 (PNVAKQMHVGH).

It belongs to the class-I aminoacyl-tRNA synthetase family. Monomer.

The protein localises to the cytoplasm. It catalyses the reaction tRNA(Arg) + L-arginine + ATP = L-arginyl-tRNA(Arg) + AMP + diphosphate. This chain is Arginine--tRNA ligase, found in Photorhabdus laumondii subsp. laumondii (strain DSM 15139 / CIP 105565 / TT01) (Photorhabdus luminescens subsp. laumondii).